The primary structure comprises 367 residues: Phosphoribosylaminoimidazole-succinocarboxamide synthase (367 aa).

This sequence belongs to the SAICAR synthetase family.

The catalysed reaction is 5-amino-1-(5-phospho-D-ribosyl)imidazole-4-carboxylate + L-aspartate + ATP = (2S)-2-[5-amino-1-(5-phospho-beta-D-ribosyl)imidazole-4-carboxamido]succinate + ADP + phosphate + 2 H(+). It functions in the pathway purine metabolism; IMP biosynthesis via de novo pathway; 5-amino-1-(5-phospho-D-ribosyl)imidazole-4-carboxamide from 5-amino-1-(5-phospho-D-ribosyl)imidazole-4-carboxylate: step 1/2. The chain is Phosphoribosylaminoimidazole-succinocarboxamide synthase from Psychromonas ingrahamii (strain DSM 17664 / CCUG 51855 / 37).